The chain runs to 361 residues: Ribosomal RNA large subunit methyltransferase M (361 aa).

Residues Ser186, Cys219 to Gly222, Asp238, Asp258, and Asp275 each bind S-adenosyl-L-methionine. The Proton acceptor role is filled by Lys304.

This sequence belongs to the class I-like SAM-binding methyltransferase superfamily. RNA methyltransferase RlmE family. RlmM subfamily. As to quaternary structure, monomer.

Its subcellular location is the cytoplasm. It catalyses the reaction cytidine(2498) in 23S rRNA + S-adenosyl-L-methionine = 2'-O-methylcytidine(2498) in 23S rRNA + S-adenosyl-L-homocysteine + H(+). Its function is as follows. Catalyzes the 2'-O-methylation at nucleotide C2498 in 23S rRNA. This is Ribosomal RNA large subunit methyltransferase M from Pseudoalteromonas translucida (strain TAC 125).